Here is a 665-residue protein sequence, read N- to C-terminus: Target of rapamycin complex 2 subunit sin1 (665 aa).

Ser-62 carries the post-translational modification Phosphoserine. 2 stretches are compositionally biased toward polar residues: residues 65–83 (IVAN…TKQV) and 100–109 (YATSDLSESS). The tract at residues 65–112 (IVANDTVSNVRKPSDTKQVNGAGGQVNHSRAEDSDYATSDLSESSDVG) is disordered. At Ser-133 the chain carries Phosphoserine. The region spanning 255–392 (TSALRALLEH…ATPAQIKENQ (138 aa)) is the CRIM domain. The segment at 395 to 433 (YPFKSKHPTSIPEANNKTHIRHTSSTSSQSQKQAQDVKD) is disordered. 4 positions are modified to phosphoserine: Ser-404, Ser-490, Ser-502, and Ser-530. Residues 517–537 (RDKKGSTQQLPTSSPQNSVYG) form a disordered region. Positions 522 to 536 (STQQLPTSSPQNSVY) are enriched in polar residues. An SIN1-type PH domain is found at 558–659 (TYQEFLVWKR…IVSRIRALMN (102 aa)).

The protein belongs to the SIN1 family. In terms of assembly, the target of rapamycin complex 2 (TORC2) is composed of at least bit61, pop3/wat1, sin1, ste20 and tor1. Interacts with the sty1 MAP kinase. Post-translationally, phosphorylated; under environmental stress. Either Ser-61 or Ser-62 and Ser-298, Ser-299 or Ser-301 are phosphorylated as well.

In terms of biological role, component of the mechanistic target of rapamycin complex 2 (mTORC2), which regulates multiple cellular processes to control cell growth in response to environmental signals. In response to signals, TORC2 phosphorylates AGC protein kinase family members, such as gad8. TORC2 is required for cell survival under various stress conditions. TORC2 positively controls G1 cell-cycle arrest, sexual development and amino acid uptake. Positively regulates amino acid uptake through the control of expression of amino acid permeases. Within the mTORC2 complex, sin1 acts as a substrate adapter which recognizes and binds AGC protein kinase family members for phosphorylation by tor1. This is Target of rapamycin complex 2 subunit sin1 from Schizosaccharomyces pombe (strain 972 / ATCC 24843) (Fission yeast).